A 229-amino-acid polypeptide reads, in one-letter code: General odorant-binding protein 69 (229 aa).

The first 20 residues, 1 to 20 (MDRLLLVLLSSASLLLTVYG), serve as a signal peptide directing secretion. C66 and C106 are disulfide-bonded.

The protein belongs to the PBP/GOBP family.

It localises to the secreted. Present in the aqueous fluid surrounding olfactory sensory dendrites and are thought to aid in the capture and transport of hydrophobic odorants into and through this fluid. This Anopheles gambiae (African malaria mosquito) protein is General odorant-binding protein 69 (Obp69).